Here is a 255-residue protein sequence, read N- to C-terminus: HLA class II histocompatibility antigen, DQ alpha 2 chain (255 aa).

An N-terminal signal peptide occupies residues Met-1 to Gly-23. Positions Glu-24–Asn-110 are alpha-1. Over Glu-24–Glu-217 the chain is Extracellular. Residues Asn-104 and Asn-144 are each glycosylated (N-linked (GlcNAc...) asparagine). Residues Glu-111 to Trp-204 are alpha-2. Residues Pro-113 to Glu-205 enclose the Ig-like C1-type domain. The cysteines at positions 133 and 189 are disulfide-linked. The tract at residues Glu-205–Glu-217 is connecting peptide. A helical transmembrane segment spans residues Thr-218–Ile-240. At Gln-241 to Leu-255 the chain is on the cytoplasmic side.

It belongs to the MHC class II family. Heterodimer of an alpha and a beta subunit; also referred as MHC class II molecule. Dimer formation with HLA-DQB2, but not with HLA-DQB1, is required for efficient exit from the endoplasmic reticulum (ER). In the ER, forms a heterononamer; 3 MHC class II molecules bind to a CD74 homotrimer (also known as invariant chain or HLA class II histocompatibility antigen gamma chain). In the endosomal/lysosomal system; CD74 undergoes sequential degradation by various proteases; leaving a small fragment termed CLIP on each MHC class II molecule. MHC class II molecule interacts with HLA_DM, and HLA_DO in B-cells, in order to release CLIP and facilitate the binding of antigenic peptides. Association with HLA-DMA also occurs in skin Langerhans cells, in post-Golgi compartments. In terms of tissue distribution, restricted to skin Langerhans cells, although some expression at low levels may occur at the surface of B lymphoblastoid cells.

The protein localises to the cell membrane. It localises to the endoplasmic reticulum membrane. The protein resides in the golgi apparatus. Its subcellular location is the trans-Golgi network membrane. It is found in the endosome membrane. The protein localises to the lysosome membrane. In terms of biological role, binds peptides derived from antigens that access the endocytic route of antigen presenting cells (APC) and presents them on the cell surface for recognition by the CD4 T-cells. The peptide binding cleft accommodates peptides of 10-30 residues. The peptides presented by MHC class II molecules are generated mostly by degradation of proteins that access the endocytic route, where they are processed by lysosomal proteases and other hydrolases. Exogenous antigens that have been endocytosed by the APC are thus readily available for presentation via MHC II molecules, and for this reason this antigen presentation pathway is usually referred to as exogenous. As membrane proteins on their way to degradation in lysosomes as part of their normal turn-over are also contained in the endosomal/lysosomal compartments, exogenous antigens must compete with those derived from endogenous components. Autophagy is also a source of endogenous peptides, autophagosomes constitutively fuse with MHC class II loading compartments. In addition to APCs, other cells of the gastrointestinal tract, such as epithelial cells, express MHC class II molecules and CD74 and act as APCs, which is an unusual trait of the GI tract. To produce a MHC class II molecule that presents an antigen, three MHC class II molecules (heterodimers of an alpha and a beta chain) associate with a CD74 trimer in the ER to form a heterononamer. Soon after the entry of this complex into the endosomal/lysosomal system where antigen processing occurs, CD74 undergoes a sequential degradation by various proteases, including CTSS and CTSL, leaving a small fragment termed CLIP (class-II-associated invariant chain peptide). The removal of CLIP is facilitated by HLA-DM via direct binding to the alpha-beta-CLIP complex so that CLIP is released. HLA-DM stabilizes MHC class II molecules until primary high affinity antigenic peptides are bound. The MHC II molecule bound to a peptide is then transported to the cell membrane surface. In B-cells, the interaction between HLA-DM and MHC class II molecules is regulated by HLA-DO. Primary dendritic cells (DCs) also to express HLA-DO. Lysosomal microenvironment has been implicated in the regulation of antigen loading into MHC II molecules, increased acidification produces increased proteolysis and efficient peptide loading. The chain is HLA class II histocompatibility antigen, DQ alpha 2 chain (HLA-DQA2) from Homo sapiens (Human).